A 466-amino-acid chain; its full sequence is Glutamate--tRNA ligase (466 aa).

Positions 10-20 (PSPTGFLHIGG) match the 'HIGH' region motif. The 'KMSKS' region motif lies at 252 to 256 (KLSKR). Residue Lys255 participates in ATP binding.

The protein belongs to the class-I aminoacyl-tRNA synthetase family. Glutamate--tRNA ligase type 1 subfamily. As to quaternary structure, monomer.

The protein resides in the cytoplasm. The catalysed reaction is tRNA(Glu) + L-glutamate + ATP = L-glutamyl-tRNA(Glu) + AMP + diphosphate. In terms of biological role, catalyzes the attachment of glutamate to tRNA(Glu) in a two-step reaction: glutamate is first activated by ATP to form Glu-AMP and then transferred to the acceptor end of tRNA(Glu). In Mycoplasmopsis synoviae (strain 53) (Mycoplasma synoviae), this protein is Glutamate--tRNA ligase.